A 117-amino-acid polypeptide reads, in one-letter code: Virion membrane protein A21 (117 aa).

Residues 1–21 (MITLFLILCYFILIFNIIVPA) traverse the membrane as a helical; Signal-anchor for type III membrane protein segment. Topologically, residues 22-117 (ISEKMRRERA…RAYSDLFFTT (96 aa)) are virion surface.

It belongs to the chordopoxvirinae A21 family. In terms of assembly, envelope protein part of a stable entry-fusion complex (EFC) which is at least composed of proteins A16, A21, A28, G3, G9, H2, J5, and L5. Formation of the viral membrane is necessary for the assembly of the complex. Post-translationally, contains two intramolecular disulfide bonds. They are created by the viral disulfide bond formation pathway, a poxvirus-specific pathway that operates on the cytoplasmic side of the MV membranes.

It is found in the virion membrane. Envelope protein part of the entry-fusion complex responsible for the virus membrane fusion with host cell membrane during virus entry. The protein is Virion membrane protein A21 of Vaccinia virus (strain Ankara) (VACV).